A 131-amino-acid chain; its full sequence is MKIALIAHDKKKNDMVSFAYAYKPIFEQHELFATGTTGLRIMEATGLVVTRYQSGPLGGDQEIGAMIAKNDLDMVIFFRDPLTAQPHEPDVNALLRLCDVYAIPLATNMASAEMLMHALERGDLDYRKLRK.

An MGS-like domain is found at 1–131 (MKIALIAHDK…GDLDYRKLRK (131 aa)). Substrate contacts are provided by residues histidine 8, lysine 12, 34 to 37 (TGTT), and 54 to 55 (SG). Aspartate 60 (proton donor/acceptor) is an active-site residue. Histidine 87 is a binding site for substrate.

The protein belongs to the methylglyoxal synthase family.

The catalysed reaction is dihydroxyacetone phosphate = methylglyoxal + phosphate. Functionally, catalyzes the formation of methylglyoxal from dihydroxyacetone phosphate. This Bacillus cereus (strain ATCC 10987 / NRS 248) protein is Methylglyoxal synthase.